We begin with the raw amino-acid sequence, 419 residues long: Tyrosine--tRNA ligase (419 aa).

Tyrosine 34 contacts L-tyrosine. The 'HIGH' region signature appears at 39-48 (PSGDSMHIGH). Residues tyrosine 168 and glutamine 172 each coordinate L-tyrosine. A 'KMSKS' region motif is present at residues 230-234 (KFGKS). ATP is bound at residue lysine 233. Residues 352 to 418 (VNLVDWLVSL…GKKKYFLVSY (67 aa)) form the S4 RNA-binding domain.

Belongs to the class-I aminoacyl-tRNA synthetase family. TyrS type 1 subfamily. As to quaternary structure, homodimer.

It is found in the cytoplasm. The enzyme catalyses tRNA(Tyr) + L-tyrosine + ATP = L-tyrosyl-tRNA(Tyr) + AMP + diphosphate + H(+). Its function is as follows. Catalyzes the attachment of tyrosine to tRNA(Tyr) in a two-step reaction: tyrosine is first activated by ATP to form Tyr-AMP and then transferred to the acceptor end of tRNA(Tyr). The protein is Tyrosine--tRNA ligase of Listeria welshimeri serovar 6b (strain ATCC 35897 / DSM 20650 / CCUG 15529 / CIP 8149 / NCTC 11857 / SLCC 5334 / V8).